The sequence spans 107 residues: Phosphoribosyl-ATP pyrophosphatase (107 aa).

It belongs to the PRA-PH family.

It localises to the cytoplasm. It catalyses the reaction 1-(5-phospho-beta-D-ribosyl)-ATP + H2O = 1-(5-phospho-beta-D-ribosyl)-5'-AMP + diphosphate + H(+). Its pathway is amino-acid biosynthesis; L-histidine biosynthesis; L-histidine from 5-phospho-alpha-D-ribose 1-diphosphate: step 2/9. This is Phosphoribosyl-ATP pyrophosphatase from Bacillus cereus (strain ZK / E33L).